Consider the following 384-residue polypeptide: Carbamoyl phosphate synthase small chain (384 aa).

Positions 1 to 192 (MMKRIPAILV…LTDNIRVHRV (192 aa)) are CPSase. The L-glutamine site is built by Ser51, Gly244, and Gly246. A Glutamine amidotransferase type-1 domain is found at 196-382 (KVIVIDFGVK…IEIMTKSKNK (187 aa)). The active-site Nucleophile is the Cys272. 5 residues coordinate L-glutamine: Met273, Gln276, Asn312, Gly314, and Phe315. Catalysis depends on residues His355 and Glu357.

This sequence belongs to the CarA family. In terms of assembly, composed of two chains; the small (or glutamine) chain promotes the hydrolysis of glutamine to ammonia, which is used by the large (or ammonia) chain to synthesize carbamoyl phosphate. Tetramer of heterodimers (alpha,beta)4.

It localises to the plastid. Its subcellular location is the chloroplast. It catalyses the reaction hydrogencarbonate + L-glutamine + 2 ATP + H2O = carbamoyl phosphate + L-glutamate + 2 ADP + phosphate + 2 H(+). It carries out the reaction L-glutamine + H2O = L-glutamate + NH4(+). Its pathway is amino-acid biosynthesis; L-arginine biosynthesis; carbamoyl phosphate from bicarbonate: step 1/1. It participates in pyrimidine metabolism; UMP biosynthesis via de novo pathway; (S)-dihydroorotate from bicarbonate: step 1/3. Functionally, small subunit of the glutamine-dependent carbamoyl phosphate synthetase (CPSase). CPSase catalyzes the formation of carbamoyl phosphate from the ammonia moiety of glutamine, carbonate, and phosphate donated by ATP, constituting the first step of 2 biosynthetic pathways, one leading to arginine and/or urea and the other to pyrimidine nucleotides. The small subunit (glutamine amidotransferase) binds and cleaves glutamine to supply the large subunit with the substrate ammonia. In Pyropia yezoensis (Susabi-nori), this protein is Carbamoyl phosphate synthase small chain.